The sequence spans 153 residues: Probable Brix domain-containing ribosomal biogenesis protein (153 aa).

The 153-residue stretch at 1–153 folds into the Brix domain; the sequence is MQVLTTSRKP…RILKISRSSR (153 aa).

Probably involved in the biogenesis of the ribosome. This is Probable Brix domain-containing ribosomal biogenesis protein from Archaeoglobus fulgidus (strain ATCC 49558 / DSM 4304 / JCM 9628 / NBRC 100126 / VC-16).